Reading from the N-terminus, the 355-residue chain is 3-isopropylmalate dehydrogenase (355 aa).

4 residues coordinate substrate: Arg-90, Arg-100, Arg-128, and Asp-222. Asp-222, Asp-246, and Asp-250 together coordinate Mg(2+). 280 to 292 (GSAPDIAGKGVAN) contributes to the NAD(+) binding site.

Belongs to the isocitrate and isopropylmalate dehydrogenases family. LeuB type 1 subfamily. As to quaternary structure, homodimer. Mg(2+) serves as cofactor. It depends on Mn(2+) as a cofactor.

The protein localises to the cytoplasm. The enzyme catalyses (2R,3S)-3-isopropylmalate + NAD(+) = 4-methyl-2-oxopentanoate + CO2 + NADH. It functions in the pathway amino-acid biosynthesis; L-leucine biosynthesis; L-leucine from 3-methyl-2-oxobutanoate: step 3/4. Functionally, catalyzes the oxidation of 3-carboxy-2-hydroxy-4-methylpentanoate (3-isopropylmalate) to 3-carboxy-4-methyl-2-oxopentanoate. The product decarboxylates to 4-methyl-2 oxopentanoate. The sequence is that of 3-isopropylmalate dehydrogenase from Cupriavidus pinatubonensis (strain JMP 134 / LMG 1197) (Cupriavidus necator (strain JMP 134)).